The primary structure comprises 248 residues: Tabinhibitin 10 (248 aa).

The signal sequence occupies residues 1 to 22 (MTLKRIFCAALALIVLQSVASA). The region spanning 66-208 (LQKTNWLRGV…NYKGAFHCSL (143 aa)) is the SCP domain. The Cell attachment site motif lies at 221-223 (RGD).

This sequence belongs to the CRISP family. As to expression, expressed in salivary glands.

The protein localises to the secreted. Functionally, inhibits platelet aggregation induced by all agonists tested (ADP, arachidonic acid, the thromboxane A2 analog U46619, thrombin, and snake venom snaclecs (TMVA that activates platelet through GPIB, and stejnulxin that specifically acts through GPVI (GP6))). May act by competing with fibrinogen for binding to glycoprotein IIb/IIIa (ITGA2B/ITGB3). The chain is Tabinhibitin 10 from Tabanus yao (Horsefly).